Consider the following 144-residue polypeptide: Large ribosomal subunit protein uL11 (144 aa).

It belongs to the universal ribosomal protein uL11 family. Part of the ribosomal stalk of the 50S ribosomal subunit. Interacts with L10 and the large rRNA to form the base of the stalk. L10 forms an elongated spine to which L12 dimers bind in a sequential fashion forming a multimeric L10(L12)X complex. One or more lysine residues are methylated.

Its function is as follows. Forms part of the ribosomal stalk which helps the ribosome interact with GTP-bound translation factors. This is Large ribosomal subunit protein uL11 from Neisseria gonorrhoeae (strain ATCC 700825 / FA 1090).